A 196-amino-acid chain; its full sequence is Phosphoheptose isomerase (196 aa).

In terms of domain architecture, SIS spans 38 to 196 (LIAGYRAGAR…VEHALFAPRQ (159 aa)). 53–55 (NGG) contacts substrate. The Zn(2+) site is built by His-62 and Glu-66. Substrate-binding positions include Glu-66, 95–96 (ND), 121–123 (STS), Ser-126, and Gln-173. Zn(2+) is bound by residues Gln-173 and His-181.

The protein belongs to the SIS family. GmhA subfamily. The cofactor is Zn(2+).

It is found in the cytoplasm. It catalyses the reaction 2 D-sedoheptulose 7-phosphate = D-glycero-alpha-D-manno-heptose 7-phosphate + D-glycero-beta-D-manno-heptose 7-phosphate. The protein operates within carbohydrate biosynthesis; D-glycero-D-manno-heptose 7-phosphate biosynthesis; D-glycero-alpha-D-manno-heptose 7-phosphate and D-glycero-beta-D-manno-heptose 7-phosphate from sedoheptulose 7-phosphate: step 1/1. Its function is as follows. Catalyzes the isomerization of sedoheptulose 7-phosphate in D-glycero-D-manno-heptose 7-phosphate. In Mycobacterium bovis (strain ATCC BAA-935 / AF2122/97), this protein is Phosphoheptose isomerase.